Here is a 365-residue protein sequence, read N- to C-terminus: Tubulin-like protein CetZ (365 aa).

GTP contacts are provided by residues 10–14 (QCGGK), 103–105 (GTG), Glu-136, Asn-163, and Asn-181.

It belongs to the CetZ family.

The protein localises to the cytoplasm. In terms of biological role, involved in cell shape control. The chain is Tubulin-like protein CetZ from Pyrococcus abyssi (strain GE5 / Orsay).